Reading from the N-terminus, the 426-residue chain is Enolase (426 aa).

Gln163 provides a ligand contact to (2R)-2-phosphoglycerate. Catalysis depends on Glu205, which acts as the Proton donor. Mg(2+)-binding residues include Asp242, Glu286, and Asp313. (2R)-2-phosphoglycerate-binding residues include Lys338, Arg367, Ser368, and Lys389. Catalysis depends on Lys338, which acts as the Proton acceptor.

The protein belongs to the enolase family. Mg(2+) serves as cofactor.

It is found in the cytoplasm. The protein resides in the secreted. Its subcellular location is the cell surface. It catalyses the reaction (2R)-2-phosphoglycerate = phosphoenolpyruvate + H2O. The protein operates within carbohydrate degradation; glycolysis; pyruvate from D-glyceraldehyde 3-phosphate: step 4/5. In terms of biological role, catalyzes the reversible conversion of 2-phosphoglycerate (2-PG) into phosphoenolpyruvate (PEP). It is essential for the degradation of carbohydrates via glycolysis. This chain is Enolase, found in Gemmatimonas aurantiaca (strain DSM 14586 / JCM 11422 / NBRC 100505 / T-27).